Here is a 70-residue protein sequence, read N- to C-terminus: Metallothionein-like protein 1 (70 aa).

This sequence belongs to the metallothionein superfamily. Type 15 family.

In terms of biological role, metallothioneins have a high content of cysteine residues that bind various heavy metals. The polypeptide is Metallothionein-like protein 1 (MT1) (Festuca rubra (Red fescue)).